The primary structure comprises 121 residues: Large ribosomal subunit protein bL19 (121 aa).

This sequence belongs to the bacterial ribosomal protein bL19 family.

In terms of biological role, this protein is located at the 30S-50S ribosomal subunit interface and may play a role in the structure and function of the aminoacyl-tRNA binding site. This Polaromonas sp. (strain JS666 / ATCC BAA-500) protein is Large ribosomal subunit protein bL19.